A 480-amino-acid polypeptide reads, in one-letter code: MELHIDEKRLLKIFQDNNRDEFNLNELEKFMPKEKILRVSLWLKGKNLVETEEKVKKIIKLIKEEEFPERKIANYLKQHNIKEIEIKNLKDILPKEEINAALGAIKRKGIARIEKGKIIFDNLDYKDVEEQLLQKIKENKYLDDFSEEEKKIIDILKKRGYVDFDEEKEIKIKLTEKGKEFIKNPIEIEEEITQLTRDIIISGKWKKAYIRPYDVKVPTKPIYPAKVHPLTRIIREVKEILLAMGFKEVKSPIVETEFWNFDMLFEPQDHPAREMQDTFFLKYPNEGDIPEDLLSKVKEVHERCWKYKFDENVSRRLILRTHTTASSIRYLASLSDEEKNKPHKVFCIDRVFRNEAIDYKHLPEFYQCEGIIMDDNVNFNNLIGVLKEFLNRLGFEKVRFRPAYFPFTEPSLEAEVYLEGKGWLEILGAGIFRPEVLEPIGIEKPVLAWGIGFSRLAMLRYGLTDIRDLHKNDLDWLKRV.

Residues T324 and F407 each contribute to the L-phenylalanine site. Residue E409 participates in Mg(2+) binding. F432 is a binding site for L-phenylalanine.

The protein belongs to the class-II aminoacyl-tRNA synthetase family. Phe-tRNA synthetase alpha subunit type 2 subfamily. In terms of assembly, tetramer of two alpha and two beta subunits. It depends on Mg(2+) as a cofactor.

It localises to the cytoplasm. The enzyme catalyses tRNA(Phe) + L-phenylalanine + ATP = L-phenylalanyl-tRNA(Phe) + AMP + diphosphate + H(+). The protein is Phenylalanine--tRNA ligase alpha subunit of Methanocaldococcus jannaschii (strain ATCC 43067 / DSM 2661 / JAL-1 / JCM 10045 / NBRC 100440) (Methanococcus jannaschii).